We begin with the raw amino-acid sequence, 294 residues long: 4-hydroxy-tetrahydrodipicolinate synthase (294 aa).

Pyruvate is bound at residue T47. Residue Y135 is the Proton donor/acceptor of the active site. Residue K164 is the Schiff-base intermediate with substrate of the active site. A pyruvate-binding site is contributed by V206.

This sequence belongs to the DapA family. Homotetramer; dimer of dimers.

It is found in the cytoplasm. It catalyses the reaction L-aspartate 4-semialdehyde + pyruvate = (2S,4S)-4-hydroxy-2,3,4,5-tetrahydrodipicolinate + H2O + H(+). It participates in amino-acid biosynthesis; L-lysine biosynthesis via DAP pathway; (S)-tetrahydrodipicolinate from L-aspartate: step 3/4. Its function is as follows. Catalyzes the condensation of (S)-aspartate-beta-semialdehyde [(S)-ASA] and pyruvate to 4-hydroxy-tetrahydrodipicolinate (HTPA). This is 4-hydroxy-tetrahydrodipicolinate synthase from Lachnoclostridium phytofermentans (strain ATCC 700394 / DSM 18823 / ISDg) (Clostridium phytofermentans).